Consider the following 590-residue polypeptide: Muscarinic acetylcholine receptor M3 (590 aa).

Residues 1–67 (MTLHSNSTTS…DPLGGHTVWQ (67 aa)) lie on the Extracellular side of the membrane. N6, N15, N41, and N48 each carry an N-linked (GlcNAc...) asparagine glycan. A helical transmembrane segment spans residues 68–91 (VVFIAFLTGILALVTIIGNILVIV). Residues 92–104 (SFKVNKQLKTVNN) lie on the Cytoplasmic side of the membrane. Residues 105-130 (YFLLSLACADLIIGVISMNLFTTYII) traverse the membrane as a helical segment. The Extracellular segment spans residues 131 to 142 (MNRWALGNLACD). A disulfide bond links C141 and C221. The chain crosses the membrane as a helical span at residues 143 to 164 (LWLAIDYVASNASVMNLLVISF). Residues 165 to 184 (DRYFSITRPLTYRAKRTTKR) lie on the Cytoplasmic side of the membrane. Residues 185–206 (AGVMIGLAWVISFVLWAPAILF) traverse the membrane as a helical segment. Over 207–229 (WQYFVGKRTVPPGECFIQFLSEP) the chain is Extracellular. The helical transmembrane segment at 230 to 252 (TITFGTAIAAFYMPVTIMTILYW) threads the bilayer. The Cytoplasmic segment spans residues 253–491 (RIYKETEKRT…SLVKEKKAAQ (239 aa)). The Basolateral sorting signal motif lies at 275–281 (AETENFV). Residues 323-357 (SSEQMDQDHSSSDSWNNNDAAASLENSASSDEEDI) form a disordered region. A compositionally biased stretch (low complexity) spans 334-345 (SDSWNNNDAAAS). Residue S385 is modified to Phosphoserine. The helical transmembrane segment at 492–514 (TLSAILLAFIITWTPYNIMVLVN) threads the bilayer. Residues 515 to 526 (TFCDSCIPKTFW) are Extracellular-facing. C517 and C520 are disulfide-bonded. Residues 527–546 (NLGYWLCYINSTVNPVCYAL) form a helical membrane-spanning segment. Topologically, residues 547–590 (CNKTFRTTFKMLLLCQCDKKKRRKQQYQQRQSVIFHKRAPEQAL) are cytoplasmic.

This sequence belongs to the G-protein coupled receptor 1 family. Muscarinic acetylcholine receptor subfamily. CHRM3 sub-subfamily. Homodimer; the dimers can form tetramers. Interacts with NALCN. Interacts with TMEM147.

The protein resides in the cell membrane. It localises to the postsynaptic cell membrane. The protein localises to the basolateral cell membrane. Its subcellular location is the endoplasmic reticulum membrane. In terms of biological role, the muscarinic acetylcholine receptor mediates various cellular responses, including inhibition of adenylate cyclase, breakdown of phosphoinositides and modulation of potassium channels through the action of G proteins. Primary transducing effect is Pi turnover. The protein is Muscarinic acetylcholine receptor M3 (CHRM3) of Pongo pygmaeus (Bornean orangutan).